The following is a 103-amino-acid chain: Somatostatin-2 (103 aa).

A signal peptide spans 1 to 21; it reads MLGSAGTLLLLLLAWGARALS. The propeptide occupies 22–87; the sequence is QPDDNRITTG…VKFPRLSLRE (66 aa). Cys92 and Cys103 form a disulfide bridge.

This sequence belongs to the somatostatin family.

It is found in the secreted. Somatostatin inhibits the release of somatotropin. The polypeptide is Somatostatin-2 (sst2) (Pelophylax ridibundus (Marsh frog)).